The sequence spans 355 residues: Protein RecA (355 aa).

An ATP-binding site is contributed by Gly65–Thr72.

It belongs to the RecA family.

It is found in the cytoplasm. In terms of biological role, can catalyze the hydrolysis of ATP in the presence of single-stranded DNA, the ATP-dependent uptake of single-stranded DNA by duplex DNA, and the ATP-dependent hybridization of homologous single-stranded DNAs. It interacts with LexA causing its activation and leading to its autocatalytic cleavage. This Pseudomonas putida (strain ATCC 47054 / DSM 6125 / CFBP 8728 / NCIMB 11950 / KT2440) protein is Protein RecA.